The chain runs to 2207 residues: Desmoplakin-B (2207 aa).

Coiled coils occupy residues 506-916 (MEEL…EAGK), 952-1000 (AKHA…EQGR), and 1029-1063 (TERL…LLKN). The segment covering 905 to 924 (KQRQVAEEEAGKRRRTESQL) has biased composition (basic and acidic residues). Positions 905–933 (KQRQVAEEEAGKRRRTESQLEKSSQAMRE) are disordered. 9 Plectin repeats span residues 1369-1406 (LLEA…DKKQ), 1407-1445 (LLIA…TLRL), 1446-1483 (LQAQ…YQAL), 1571-1609 (YLRG…TLEL), 1610-1647 (LEAQ…KDKL), 1685-1723 (LLEA…NQIL), 1783-1811 (IVDP…FLEL), 1992-2029 (LLEA…MANR), and 2068-2106 (FLEF…AQRL). A compositionally biased stretch (polar residues) spans 2155 to 2164 (ISSPYNLSNP). The interval 2155–2207 (ISSPYNLSNPGSASGSRSGSRRGSVDYSLSPSSSSRYSSFSYSRTSFSSRSLS) is disordered. Residues 2165 to 2207 (GSASGSRSGSRRGSVDYSLSPSSSSRYSSFSYSRTSFSSRSLS) show a composition bias toward low complexity.

This sequence belongs to the plakin or cytolinker family.

The protein resides in the cell junction. The protein localises to the desmosome. Its subcellular location is the cell membrane. Involved in the organization of desmosome cell-cell junctions. Of particular importance in cell adhesion in the skin and during cardiac development. May also play a role in the regulation of Wnt, TGF-beta and Hippo signaling pathways. This is Desmoplakin-B from Danio rerio (Zebrafish).